A 159-amino-acid polypeptide reads, in one-letter code: Phosphopantetheine adenylyltransferase (159 aa).

Position 10 (Thr-10) interacts with substrate. ATP contacts are provided by residues 10–11 (TF) and His-18. Substrate is bound by residues Lys-42, Met-74, and Arg-88. ATP-binding positions include 89-91 (GLR), Glu-99, and 124-130 (WSFISSS).

It belongs to the bacterial CoaD family. In terms of assembly, homohexamer. Mg(2+) is required as a cofactor.

The protein resides in the cytoplasm. It carries out the reaction (R)-4'-phosphopantetheine + ATP + H(+) = 3'-dephospho-CoA + diphosphate. The protein operates within cofactor biosynthesis; coenzyme A biosynthesis; CoA from (R)-pantothenate: step 4/5. In terms of biological role, reversibly transfers an adenylyl group from ATP to 4'-phosphopantetheine, yielding dephospho-CoA (dPCoA) and pyrophosphate. The polypeptide is Phosphopantetheine adenylyltransferase (Salmonella typhimurium (strain LT2 / SGSC1412 / ATCC 700720)).